Here is a 218-residue protein sequence, read N- to C-terminus: Hypoxanthine-guanine phosphoribosyltransferase (218 aa).

GMP-binding positions include Lys69, Glu134–Thr142, Lys166, Lys186–Val188, and Asp194. Residue Asp138 is the Proton acceptor of the active site. Position 194 (Asp194) interacts with Mg(2+).

Belongs to the purine/pyrimidine phosphoribosyltransferase family. As to quaternary structure, homotetramer. Mg(2+) is required as a cofactor.

It is found in the cytoplasm. It catalyses the reaction IMP + diphosphate = hypoxanthine + 5-phospho-alpha-D-ribose 1-diphosphate. The enzyme catalyses GMP + diphosphate = guanine + 5-phospho-alpha-D-ribose 1-diphosphate. The protein operates within purine metabolism; IMP biosynthesis via salvage pathway; IMP from hypoxanthine: step 1/1. In terms of biological role, converts guanine to guanosine monophosphate, and hypoxanthine to inosine monophosphate. Transfers the 5-phosphoribosyl group from 5-phosphoribosylpyrophosphate onto the purine. Plays a central role in the generation of purine nucleotides through the purine salvage pathway. This is Hypoxanthine-guanine phosphoribosyltransferase (HPRT1) from Gallus gallus (Chicken).